The primary structure comprises 448 residues: Antizyme inhibitor 1 (448 aa).

This sequence belongs to the Orn/Lys/Arg decarboxylase class-II family. ODC antizyme inhibitor subfamily. In terms of assembly, monomer. Interacts with OAZ1 and OAZ3; this interaction disrupts the interaction between the antizyme and ODC1. In terms of processing, ubiquitinated, leading to its proteasomal degradation; a process that is reduced in presence of antizyme OAZ1. Expressed in various tissues including liver, heart and kidney.

It is found in the nucleus. Its function is as follows. Antizyme inhibitor (AZI) protein that positively regulates ornithine decarboxylase (ODC) activity and polyamine uptake. AZI is an enzymatically inactive ODC homolog that counteracts the negative effect of ODC antizymes (AZs) OAZ1, OAZ2 and OAZ3 on ODC activity by competing with ODC for antizyme-binding. Inhibits antizyme-dependent ODC degradation and releases ODC monomers from their inactive complex with antizymes, leading to formation of the catalytically active ODC homodimer and restoring polyamine production. This Rattus norvegicus (Rat) protein is Antizyme inhibitor 1 (Azin1).